A 195-amino-acid chain; its full sequence is L-rhamnose-binding lectin CSL3 (195 aa).

2 SUEL-type lectin domains span residues 1-95 and 105-195; these read AISI…YSCV and ICEG…YTCD.

In terms of biological role, L-rhamnose binding lectin. Has hemagglutinating activity towards rabbit erythrocytes, human type A erythrocytes, human type B erythrocytes, human type O erythrocytes and sheep erythrocytes. Hemagglutinating activity is inhibited by smooth-type lipopolysaccharide (LPS) from S.flexneri 1A, A.salmonicida and E.coli K12, but not by rough-type LPS from S.flexneri, E.coli K12 and E.coli EH100. Agglutinates E.coli K12 and B.subtilis. The chain is L-rhamnose-binding lectin CSL3 from Oncorhynchus keta (Chum salmon).